The following is a 620-amino-acid chain: Chaperone protein HscA homolog (620 aa).

It belongs to the heat shock protein 70 family.

Chaperone involved in the maturation of iron-sulfur cluster-containing proteins. Has a low intrinsic ATPase activity which is markedly stimulated by HscB. The polypeptide is Chaperone protein HscA homolog (Pseudomonas savastanoi pv. phaseolicola (strain 1448A / Race 6) (Pseudomonas syringae pv. phaseolicola (strain 1448A / Race 6))).